Reading from the N-terminus, the 1376-residue chain is DNA-directed RNA polymerase subunit beta'' (1376 aa).

4 residues coordinate Zn(2+): cysteine 221, cysteine 290, cysteine 297, and cysteine 300. Residues proline 895–proline 919 are disordered.

The protein belongs to the RNA polymerase beta' chain family. RpoC2 subfamily. In plastids the minimal PEP RNA polymerase catalytic core is composed of four subunits: alpha, beta, beta', and beta''. When a (nuclear-encoded) sigma factor is associated with the core the holoenzyme is formed, which can initiate transcription. Zn(2+) serves as cofactor.

The protein resides in the plastid. Its subcellular location is the chloroplast. The catalysed reaction is RNA(n) + a ribonucleoside 5'-triphosphate = RNA(n+1) + diphosphate. DNA-dependent RNA polymerase catalyzes the transcription of DNA into RNA using the four ribonucleoside triphosphates as substrates. The protein is DNA-directed RNA polymerase subunit beta'' of Pelargonium hortorum (Common geranium).